We begin with the raw amino-acid sequence, 880 residues long: Interference hedgehog (880 aa).

An N-terminal signal peptide occupies residues 1–20 (MPSIVSSLLLVVLLTSPLGA). Residues 21–703 (IPVLYPSPPP…SHNETFSMSP (683 aa)) are Extracellular-facing. Ig-like C2-type domains are found at residues 37–142 (PGVR…TARL), 154–235 (PVTS…STSS), 251–339 (PYLL…FIQV), and 345–432 (PQIV…LQVT). Cystine bridges form between C60/C126, C172/C219, C275/C323, and C366/C414. N79, N102, and N208 each carry an N-linked (GlcNAc...) asparagine glycan. Residues 435–468 (PIHSESTQQSDHNHSKANRGRRPAQMIPPSAPNV) form a disordered region. N-linked (GlcNAc...) asparagine glycosylation is found at N447 and N467. 2 consecutive Fibronectin type-III domains span residues 462–570 (PPSA…LQPG) and 578–673 (VPEM…TQRP). R498, K504, K506, and R544 together coordinate heparin. N560 carries an N-linked (GlcNAc...) asparagine glycan. Positions 665–699 (LKQGRTQRPMVSTTEEATLQTGVRDTTTPSHNETF) are disordered. Positions 668 to 699 (GRTQRPMVSTTEEATLQTGVRDTTTPSHNETF) are enriched in polar residues. N-linked (GlcNAc...) asparagine glycosylation occurs at N696. A helical membrane pass occupies residues 704–724 (IVTGTIGGGAVLILFVVTTCL). At 725-880 (CMWRRRNSRA…SSGSLNSVGV (156 aa)) the chain is on the cytoplasmic side. A disordered region spans residues 797 to 880 (YFQRQPTYDY…SSGSLNSVGV (84 aa)). 2 stretches are compositionally biased toward low complexity: residues 827-839 (RAGS…NNLN) and 864-880 (SSRS…SVGV).

The protein belongs to the immunoglobulin superfamily. IHOG family. Homodimer. Heterotetramer; 2 iHog chains bind 2 hh chains when facilitated by heparin, heparin is required to promote high-affinity interactions between hh and iHog.

The protein resides in the membrane. Its function is as follows. Mediates response to the active Hedgehog (Hh) protein signal in embryos, functioning upstream or at the level of patched (ptc). The polypeptide is Interference hedgehog (Drosophila ananassae (Fruit fly)).